We begin with the raw amino-acid sequence, 1168 residues long: Myosin IC heavy chain (1168 aa).

The Myosin motor domain occupies 7–666 (HGVDDMVMLT…SVFSLEELRD (660 aa)). Position 101–108 (101–108 (GESGAGKT)) interacts with ATP. Phosphoserine is present on serine 311. The segment at 542-564 (INILVATLSKCTPHYIRCIKPNE) is actin-binding. Positions 704 to 892 (KERRRLSLER…KVSVAPGLPP (189 aa)) constitute a TH1 domain. Disordered regions lie at residues 876 to 909 (DGKV…GGAS), 921 to 978 (ILGA…APGP), and 1036 to 1168 (AAAP…PPGM). Polar residues predominate over residues 895–909 (APNIQAPQETSGGAS). Gly residues-rich tracts occupy residues 924–939 (AKGG…GGPS) and 950–959 (PGGGGGGPSP). The span at 960-978 (FGGRPSPSGPPAAASAPGP) shows a compositional bias: low complexity. The region spanning 976–1035 (PGPEQARALYDFAAENPDELTFNEGAVVTVINKSNPDWWEGELNGQRGVFPASYVELIPR) is the SH3 domain. Over residues 1040–1052 (APGPSGGPRPAPP) the composition is skewed to pro residues. Composition is skewed to gly residues over residues 1063–1083 (GGPG…GRGG) and 1090–1099 (GRAGPPGGRG). Over residues 1100 to 1112 (MPAPGGAAPRGRG) the composition is skewed to low complexity. A compositionally biased stretch (gly residues) spans 1120–1141 (GPPGGGRGGAPPPGGMRGRGGP). Residues 1152-1161 (GGMMPPRGRA) show a composition bias toward low complexity.

The protein belongs to the TRAFAC class myosin-kinesin ATPase superfamily. Myosin family. As to quaternary structure, myosin I heavy chain is single-headed. Dimer of a heavy and a light chain. Inability to self-assemble into filaments.

Myosin is a protein that binds to F-actin and has ATPase activity that is activated by F-actin. This Acanthamoeba castellanii (Amoeba) protein is Myosin IC heavy chain (MIC).